We begin with the raw amino-acid sequence, 751 residues long: Myb-related protein A (751 aa).

Residues 1–22 are disordered; the sequence is MAKRSRSEDEDDDLQYADHDYE. 3 HTH myb-type domains span residues 30–81, 82–137, and 138–188; these read KKLW…QKVL, NPEL…NPEV, and KKSS…RRKV. 3 DNA-binding regions (H-T-H motif) span residues 58-81, 110-133, and 161-184; these read WTLIASHLQNRSDFQCQHRWQKVL, WSLIAKHLKGRIGKQCRERWHNHL, and WAEIAKLLPGRTDNSIKNHWNSTM. Lys199 is covalently cross-linked (Glycyl lysine isopeptide (Lys-Gly) (interchain with G-Cter in SUMO2)). The segment at 230 to 294 is transcriptional activation domain; the sequence is IPGYQYVSPD…RLPPQPGSFS (65 aa). Positions 297-552 are negative regulatory domain; sequence SGSFLMDDSM…IRRSILGTTP (256 aa). Lys393 carries the post-translational modification N6-acetyllysine. Glycyl lysine isopeptide (Lys-Gly) (interchain with G-Cter in SUMO2) cross-links involve residues Lys591 and Lys601.

Component of the DREAM complex (also named LINC complex) at least composed of E2F4, E2F5, LIN9, LIN37, LIN52, LIN54, MYBL1, MYBL2, RBL1, RBL2, RBBP4, TFDP1 and TFDP2. The complex exists in quiescent cells where it represses cell cycle-dependent genes. It dissociates in S phase when LIN9, LIN37, LIN52 and LIN54 form a subcomplex that binds to MYBL2. Predominantly in the testis. Very low levels in the ovaries, spleen and brain.

It localises to the nucleus. Its function is as follows. Transcription factor that specifically recognizes the sequence 5'-YAAC[GT]G-3'. Acts as a master regulator of male meiosis by promoting expression of piRNAs: activates expression of both piRNA precursor RNAs and expression of protein-coding genes involved in piRNA metabolism, such as PIWIL1. The piRNA metabolic process mediates the repression of transposable elements during meiosis by forming complexes composed of piRNAs and Piwi proteins and governs the methylation and subsequent repression of transposons, which is essential for the germline integrity. Transcriptional activator of SOX30. The protein is Myb-related protein A (Mybl1) of Mus musculus (Mouse).